The following is a 172-amino-acid chain: Putative Dresden prostate carcinoma protein 2 (172 aa).

A disordered region spans residues 40-61 (QCEEEEAMTPRPTKARAPLPSA).

In terms of tissue distribution, very high expression in prostate and prostate cancer. Faint expression in other tissues.

The chain is Putative Dresden prostate carcinoma protein 2 (HMGN2P46) from Homo sapiens (Human).